The primary structure comprises 573 residues: Putative ABC transporter ATP-binding protein LJ_1704 (573 aa).

ABC transporter domains follow at residues 6-247 (IEFK…GVRE) and 303-536 (LKLD…ASLK). ATP contacts are provided by residues 40 to 47 (GPSGSGKS) and 337 to 344 (GQNGAGKT).

It belongs to the ABC transporter superfamily.

The protein localises to the cell membrane. Its function is as follows. Probably part of an ABC transporter complex. Responsible for energy coupling to the transport system. The polypeptide is Putative ABC transporter ATP-binding protein LJ_1704 (Lactobacillus johnsonii (strain CNCM I-12250 / La1 / NCC 533)).